The following is a 356-amino-acid chain: Phosphate acyltransferase (356 aa).

Belongs to the PlsX family. In terms of assembly, homodimer. Probably interacts with PlsY.

It localises to the cytoplasm. It catalyses the reaction a fatty acyl-[ACP] + phosphate = an acyl phosphate + holo-[ACP]. Its pathway is lipid metabolism; phospholipid metabolism. In terms of biological role, catalyzes the reversible formation of acyl-phosphate (acyl-PO(4)) from acyl-[acyl-carrier-protein] (acyl-ACP). This enzyme utilizes acyl-ACP as fatty acyl donor, but not acyl-CoA. The sequence is that of Phosphate acyltransferase from Shigella sonnei (strain Ss046).